A 217-amino-acid polypeptide reads, in one-letter code: tRNA (guanine-N(7)-)-methyltransferase (217 aa).

S-adenosyl-L-methionine-binding residues include Glu-44, Asp-69, Asp-96, and Asp-118. The active site involves Asp-118. Substrate is bound at residue Lys-122. The segment at 124–129 is interaction with RNA; it reads RHEKRR. Substrate-binding positions include Asp-154 and 193–196; that span reads TEYE.

This sequence belongs to the class I-like SAM-binding methyltransferase superfamily. TrmB family.

It catalyses the reaction guanosine(46) in tRNA + S-adenosyl-L-methionine = N(7)-methylguanosine(46) in tRNA + S-adenosyl-L-homocysteine. The protein operates within tRNA modification; N(7)-methylguanine-tRNA biosynthesis. Catalyzes the formation of N(7)-methylguanine at position 46 (m7G46) in tRNA. The chain is tRNA (guanine-N(7)-)-methyltransferase from Lactococcus lactis subsp. cremoris (strain SK11).